The primary structure comprises 507 residues: ATP synthase subunit alpha, chloroplastic (507 aa).

170–177 (GDRQTGKT) contacts ATP.

Belongs to the ATPase alpha/beta chains family. In terms of assembly, F-type ATPases have 2 components, CF(1) - the catalytic core - and CF(0) - the membrane proton channel. CF(1) has five subunits: alpha(3), beta(3), gamma(1), delta(1), epsilon(1). CF(0) has four main subunits: a, b, b' and c.

It is found in the plastid. Its subcellular location is the chloroplast thylakoid membrane. It catalyses the reaction ATP + H2O + 4 H(+)(in) = ADP + phosphate + 5 H(+)(out). Produces ATP from ADP in the presence of a proton gradient across the membrane. The alpha chain is a regulatory subunit. This Gossypium hirsutum (Upland cotton) protein is ATP synthase subunit alpha, chloroplastic.